We begin with the raw amino-acid sequence, 81 residues long: Costars family protein ABRACL (81 aa).

N-acetylmethionine is present on M1.

This sequence belongs to the costars family.

The protein is Costars family protein ABRACL (Abracl) of Mus musculus (Mouse).